Here is a 297-residue protein sequence, read N- to C-terminus: N-acetylneuraminate lyase (297 aa).

S47 and T48 together coordinate aceneuramate. Y137 serves as the catalytic Proton donor. The active-site Schiff-base intermediate with substrate is K165. 5 residues coordinate aceneuramate: T167, G189, D191, E192, and S208.

It belongs to the DapA family. NanA subfamily. As to quaternary structure, homotetramer.

It localises to the cytoplasm. It catalyses the reaction aceneuramate = aldehydo-N-acetyl-D-mannosamine + pyruvate. The protein operates within amino-sugar metabolism; N-acetylneuraminate degradation; D-fructose 6-phosphate from N-acetylneuraminate: step 1/5. Functionally, catalyzes the reversible aldol cleavage of N-acetylneuraminic acid (sialic acid; Neu5Ac) to form pyruvate and N-acetylmannosamine (ManNAc) via a Schiff base intermediate. The chain is N-acetylneuraminate lyase from Salmonella typhimurium (strain LT2 / SGSC1412 / ATCC 700720).